We begin with the raw amino-acid sequence, 271 residues long: Rhomboid-type serine protease 2 (271 aa).

The next 6 helical transmembrane spans lie at 16-36, 64-84, 89-111, 115-137, 152-172, and 176-196; these read GLAV…NLVY, HLSF…IVMF, GTLY…YCLI, LFPN…YFAV, FSFP…LLAP, and LPGH…ENWV. Catalysis depends on S125, which acts as the Nucleophile. H179 is an active-site residue. Residues 252–271 are disordered; it reads HNTDTPAEPTFQGNGRVLGN.

It belongs to the peptidase S54 family.

Its subcellular location is the golgi apparatus membrane. The protein localises to the golgi apparatus. The protein resides in the cis-Golgi network membrane. The catalysed reaction is Cleaves type-1 transmembrane domains using a catalytic dyad composed of serine and histidine that are contributed by different transmembrane domains.. Functionally, probable rhomboid-type serine protease that catalyzes intramembrane proteolysis. This is Rhomboid-type serine protease 2 (RBD2) from Kluyveromyces lactis (strain ATCC 8585 / CBS 2359 / DSM 70799 / NBRC 1267 / NRRL Y-1140 / WM37) (Yeast).